A 590-amino-acid polypeptide reads, in one-letter code: MIKFQERVTFKDVAVVFTKEELALLDKAQINLYQDVMLENFRNLMLVRDGIKNNILNLQAKGLSYLSQEVLHCWQIWKQRIRDLTVSQDYIVNLQEECSPHLEDVSLSEEWAGISLQISENENYVVNAIIKNQDITAWQSLTQVLTPESWRKANIMTEPQNSQGRYKGIYMEEKLYRRAQHDDSLSWTSCDHHESQECKGEDPGRHPSCGKNLGMKSTVEKRNAAHVLPQPFPCNNCGVAFADDTDPHVHHSTHLGEKSYKCDQYGKNFSQSQDLIVHCKTHSGKTPYEFHEWPMGCKQSSDLPRYQKVSSGDKPYKCKECGKGFRRSSSLHNHHRVHTGEMPYKCDECGKGFGFRSLLCIHQGVHTGKKPYKCEECGKGFDQSSNLLVHQRVHTGEKPYKCSECGKCFSSSSVLQVHWRFHTGEKPYRCGECGKGFSQCTHLHIHQRVHTGEKPYKCNVCGKDFAYSSVLHTHQRVHTGEKPYKCEVCGKCFSYSSYFHLHQRDHIREKPYKCDECGKGFSRNSDLNVHLRVHTGERPYKCKACGKGFSRNSYLLAHQRVHIDETQYTHCERGKDLLTHQRLHEQRETL.

A KRAB domain is found at 8–86; it reads VTFKDVAVVF…WKQRIRDLTV (79 aa). The C2H2-type 1 zinc-finger motif lies at 232–254; sequence FPCNNCGVAFADDTDPHVHHSTH. The C2H2-type 2; degenerate zinc-finger motif lies at 260–282; sequence YKCDQYGKNFSQSQDLIVHCKTH. C2H2-type zinc fingers lie at residues 316 to 338, 344 to 366, 372 to 394, 400 to 422, 428 to 450, 456 to 478, 484 to 506, 512 to 534, and 540 to 562; these read YKCK…HRVH, YKCD…QGVH, YKCE…QRVH, YKCS…WRFH, YRCG…QRVH, YKCN…QRVH, YKCE…QRDH, YKCD…LRVH, and YKCK…QRVH.

This sequence belongs to the krueppel C2H2-type zinc-finger protein family.

The protein resides in the nucleus. Its function is as follows. May be involved in transcriptional regulation. This is Zinc finger protein 285 (ZNF285) from Homo sapiens (Human).